The primary structure comprises 1124 residues: Anillin (1124 aa).

Position 1 is an N-acetylmethionine (M1). Basic and acidic residues predominate over residues 1–25; sequence MDPFTEKLLERTRARRENLQRKMAE. Residues 1–45 form a required for ubiquitination region; it reads MDPFTEKLLERTRARRENLQRKMAERPTAAPRSMTHAKRARQPLS. Disordered regions lie at residues 1–113 and 136–196; these read MDPF…ADTI and ATAA…ATPV. The segment at 1–155 is interaction with CD2AP; the sequence is MDPFTEKLLE…MQKLAEQRRR (155 aa). The nuclear localization stretch occupies residues 1 to 230; that stretch reads MDPFTEKLLE…AKQNSVQEQP (230 aa). A phosphoserine mark is found at S54 and S72. Residues 77–96 show a composition bias toward polar residues; it reads VEVSNLENKQPVESTSAKSC. S97 and S102 each carry phosphoserine. Residues 97–108 show a composition bias toward low complexity; it reads SPSPVSPQVQPQ. The segment covering 148-158 has biased composition (basic and acidic residues); the sequence is KLAEQRRRWDN. 2 positions are modified to phosphoserine: S172 and S182. Position 194 is a phosphothreonine (T194). 2 positions are modified to phosphoserine: S225 and S252. The interaction with F-actin stretch occupies residues 231-676; that stretch reads GTACLSKFSS…RDLLYSIDAY (446 aa). Residue K254 forms a Glycyl lysine isopeptide (Lys-Gly) (interchain with G-Cter in SUMO1) linkage. A Phosphoserine modification is found at S261. Residues 294–305 are compositionally biased toward polar residues; sequence TSPVKSTTSITD. The disordered stretch occupies residues 294-328; that stretch reads TSPVKSTTSITDAKSCEGQNPELLPKTPISPLKTG. T320 is subject to Phosphothreonine. A phosphoserine mark is found at S323 and S339. T364 is subject to Phosphothreonine. K371 is subject to N6-acetyllysine. A compositionally biased stretch (basic and acidic residues) spans 380–389; that stretch reads RCQEHSKESP. The disordered stretch occupies residues 380–399; sequence RCQEHSKESPARSTPHRTPI. Residues T397 and T401 each carry the phosphothreonine modification. Phosphoserine occurs at positions 417, 419, 449, 485, 518, 553, and 561. Positions 569-604 form a coiled coil; that stretch reads FSDVLEEGELDMEKSQEEMDQALAESSEEQEDALNI. Disordered stretches follow at residues 579–600 and 625–664; these read DMEKSQEEMDQALAESSEEQED and LVSTPRLELKDTSRSDESPKPGKFQRTRVPRAESGDSLGS. 2 stretches are compositionally biased toward basic and acidic residues: residues 631–644 and 654–664; these read LELKDTSRSDESPK and PRAESGDSLGS. Residues S637, S642, S658, S661, and S664 each carry the phosphoserine modification. Y671 is subject to Phosphotyrosine. Phosphoserine occurs at positions 678, 688, 792, and 927. Residues 730-1124 are localization to the cleavage furrow; that stretch reads QQTVIYQASQ…DACYKPIGKP (395 aa). The 125-residue stretch at 983-1107 folds into the PH domain; that stretch reads SVEERGFLTI…WMQKLNQVLV (125 aa).

Interacts with F-actin. Interacts with CD2AP. May interact with RHOA. Interacts with FZR1/CDH1 during mitotic exit. Post-translationally, phosphorylated during mitosis. Ubiquitinated, and this requires FZR1/CDH1. In terms of tissue distribution, ubiquitously expressed. Present at highest levels in the brain, at high levels in the placenta and testis, at intermediate levels in the intestine, ovary, skeletal muscle and thymus and at lower levels in heart, kidney, liver, lung, pancreas, prostate and spleen. In the kidney, it is widely expressed in tubules, but sparsely expressed in the glomerulus. Expression is significantly increased in renal biopsy specimens from idiopathic FSGS. Overexpressed in many tumor types including breast, colorectal, endometrial, hepatic, kidney, lung, ovarian and pancreatic tumors.

It localises to the nucleus. The protein localises to the cytoplasm. The protein resides in the cytoskeleton. It is found in the cell cortex. Its subcellular location is the cell projection. It localises to the bleb. Functionally, required for cytokinesis. Essential for the structural integrity of the cleavage furrow and for completion of cleavage furrow ingression. Plays a role in bleb assembly during metaphase and anaphase of mitosis. May play a significant role in podocyte cell migration. The protein is Anillin (ANLN) of Homo sapiens (Human).